Here is a 410-residue protein sequence, read N- to C-terminus: Sprouty-related, EVH1 domain-containing protein 2 (410 aa).

Residues T5–L122 form the WH1 domain. The tract at residues T127 to S171 is disordered. Polar residues predominate over residues T146 to S156. The region spanning S197–G252 is the KBD domain. Residues Y224 and Y227 each carry the phosphotyrosine modification. The tract at residues D274–E294 is disordered. One can recognise an SPR domain in the interval R300–A408.

In terms of assembly, homodimer and heterodimer. Able to interact with SPRED1 to form heterodimers. Interacts with RAS. May interact with ZDHHC13 (via ANK repeats) and ZDHHC17 (via ANK repeats). Interacts with TESK1. Interacts with NF1. Phosphorylated on serine and threonine residues. Phosphorylated on tyrosine. Phosphorylation of Tyr-224 and Tyr-227 are required for ubiquitination. Post-translationally, ubiquitinated; leading to degradation by the proteasome. Predominantly expressed in lung, liver and testis. In testis, it is specially found in mature spermatids projecting into the lumen of the seminiferous. Strongly expressed in glandular epithelia. Also expressed in embryonic tissues such as heart, lung, liver and brain.

It localises to the cell membrane. Its subcellular location is the cytoplasmic vesicle. The protein resides in the secretory vesicle membrane. It is found in the cytoplasm. In terms of biological role, negatively regulates Ras signaling pathways and downstream activation of MAP kinases. Recruits and translocates NF1 to the cell membrane, thereby enabling NF1-dependent hydrolysis of active GTP-bound Ras to inactive GDP-bound Ras. Inhibits fibroblast growth factor (FGF)-induced retinal lens fiber differentiation, probably by inhibiting FGF-mediated phosphorylation of ERK1/2. Inhibits TGFB-induced epithelial-to-mesenchymal transition in lens epithelial cells. This chain is Sprouty-related, EVH1 domain-containing protein 2 (Spred2), found in Mus musculus (Mouse).